The chain runs to 321 residues: Ubiquitin-conjugating enzyme E2 U (321 aa).

In terms of domain architecture, UBC core spans 4–153 (RAYLLLHRDF…LRLFNRPLQM (150 aa)). Cys89 functions as the Glycyl thioester intermediate in the catalytic mechanism. Residues 285–321 (WKSDTSLYENDTDEPREEEVEDLISWTNTLNTNTSED) form a disordered region. Residues 294-306 (NDTDEPREEEVED) show a composition bias toward acidic residues. Over residues 309–321 (SWTNTLNTNTSED) the composition is skewed to polar residues.

It belongs to the ubiquitin-conjugating enzyme family. Post-translationally, autoubiquitinated in vitro in the presence of UBR5.

The enzyme catalyses S-ubiquitinyl-[E1 ubiquitin-activating enzyme]-L-cysteine + [E2 ubiquitin-conjugating enzyme]-L-cysteine = [E1 ubiquitin-activating enzyme]-L-cysteine + S-ubiquitinyl-[E2 ubiquitin-conjugating enzyme]-L-cysteine.. It functions in the pathway protein modification; protein ubiquitination. Its function is as follows. Catalyzes the covalent attachment of ubiquitin to other proteins. The sequence is that of Ubiquitin-conjugating enzyme E2 U (UBE2U) from Homo sapiens (Human).